A 740-amino-acid polypeptide reads, in one-letter code: Ion-translocating oxidoreductase complex subunit C (740 aa).

2 4Fe-4S ferredoxin-type domains span residues Gly-369–Tyr-397 and Lys-407–Phe-436. [4Fe-4S] cluster contacts are provided by Cys-377, Cys-380, Cys-383, Cys-387, Cys-416, Cys-419, Cys-422, and Cys-426. Positions Lys-602–Lys-684 are disordered. Composition is skewed to low complexity over residues Gln-605–Gln-615 and Gln-637–Gln-647.

This sequence belongs to the 4Fe4S bacterial-type ferredoxin family. RnfC subfamily. As to quaternary structure, the complex is composed of six subunits: RsxA, RsxB, RsxC, RsxD, RsxE and RsxG. Requires [4Fe-4S] cluster as cofactor.

The protein resides in the cell inner membrane. Its function is as follows. Part of a membrane-bound complex that couples electron transfer with translocation of ions across the membrane. Required to maintain the reduced state of SoxR. In Escherichia coli O7:K1 (strain IAI39 / ExPEC), this protein is Ion-translocating oxidoreductase complex subunit C.